The chain runs to 134 residues: DNA-directed RNA polymerase subunit omega (134 aa).

Residues 76-102 (EVDEPEPDPASMIAAGGAAAADSEEQD) are disordered.

Belongs to the RNA polymerase subunit omega family. As to quaternary structure, the RNAP catalytic core consists of 2 alpha, 1 beta, 1 beta' and 1 omega subunit. When a sigma factor is associated with the core the holoenzyme is formed, which can initiate transcription.

The catalysed reaction is RNA(n) + a ribonucleoside 5'-triphosphate = RNA(n+1) + diphosphate. In terms of biological role, promotes RNA polymerase assembly. Latches the N- and C-terminal regions of the beta' subunit thereby facilitating its interaction with the beta and alpha subunits. The chain is DNA-directed RNA polymerase subunit omega from Rhizobium etli (strain ATCC 51251 / DSM 11541 / JCM 21823 / NBRC 15573 / CFN 42).